Here is a 718-residue protein sequence, read N- to C-terminus: Interleukin-1 receptor-associated kinase 1 (718 aa).

A Death domain is found at Met-27 to Ala-106. Thr-66 is modified (phosphothreonine; by PKC/PRKCI). Residues Pro-110–Asp-211 are proST region. Lys-134 is covalently cross-linked (Glycyl lysine isopeptide (Lys-Gly) (interchain with G-Cter in ubiquitin)). The disordered stretch occupies residues Ala-146–Ser-188. Over residues Cys-159–Ala-175 the composition is skewed to pro residues. A compositionally biased stretch (low complexity) spans Pro-176–Ser-188. Lys-180 participates in a covalent cross-link: Glycyl lysine isopeptide (Lys-Gly) (interchain with G-Cter in ubiquitin). A Phosphothreonine; by IRAK4 modification is found at Thr-209. Residues Phe-212–Leu-521 enclose the Protein kinase domain. Residues Ile-218–Val-226 and Lys-239 each bind ATP. Residue Asp-340 is the Proton acceptor of the active site. Residues Lys-342–Asn-345 and Asp-358 each bind ATP. Ser-375 carries the phosphoserine modification. Thr-387 carries the phosphothreonine modification. The segment at Ala-534–Ala-554 is disordered. Polar residues predominate over residues Gln-543 to Ala-554. A Phosphoserine modification is found at Ser-556. Disordered stretches follow at residues Gly-569–Asp-594, Gly-631–Pro-662, and Leu-692–Ser-718. Positions Leu-692–Asp-703 are enriched in low complexity. Residues Leu-704–Ser-718 are compositionally biased toward basic and acidic residues.

It belongs to the protein kinase superfamily. TKL Ser/Thr protein kinase family. Pelle subfamily. Homodimer. Forms a complex with TRAF6, PELI1, IRAK4 and MYD88. Direct binding of SMAD6 to PELI1 prevents complex formation and hence negatively regulates IL1R-TLR signaling and eventually NF-kappa-B-mediated gene expression. The TRAF6-PELI1-IRAK1-IRAK4-MYD88 complex recruits MAP3K7/TAK1, TAB1 and TAB2 to mediate NF-kappa-B activation. Interaction with MYD88 recruits IRAK1 to the stimulated receptor complex. Interacts with TOLLIP; this interaction occurs in the cytosol prior to receptor activation. Interacts with IL1RL1. Interacts (when polyubiquitinated) with IKBKG/NEMO. Interacts with RSAD2/viperin. Interacts with IRAK1BP1. Interacts with PELI2. Interacts with ZC3H12A; this interaction increases the interaction between ZC3H12A and IKBKB/IKKB. Interacts with IRAK4. Interacts with PELI3. Interacts with PELI1 and TRAF6. Interacts with INAVA; the interaction takes place upon PRR stimulation. Interacts (via C-terminus) with NFATC4 (via N-terminus). Mg(2+) is required as a cofactor. Following recruitment on the activated receptor complex, phosphorylated on Thr-209, probably by IRAK4, resulting in a conformational change of the kinase domain, allowing further phosphorylations to take place. Thr-387 phosphorylation in the activation loop is required to achieve full enzymatic activity. Post-translationally, polyubiquitinated by TRAF6 after cell stimulation with IL-1-beta by PELI1, PELI2 and PELI3. Polyubiquitination occurs with polyubiquitin chains linked through 'Lys-63'. Ubiquitination promotes interaction with NEMO/IKBKG. Also sumoylated; leading to nuclear translocation.

It localises to the cytoplasm. The protein localises to the nucleus. The protein resides in the lipid droplet. The catalysed reaction is L-seryl-[protein] + ATP = O-phospho-L-seryl-[protein] + ADP + H(+). It carries out the reaction L-threonyl-[protein] + ATP = O-phospho-L-threonyl-[protein] + ADP + H(+). Serine/threonine-protein kinase that plays a critical role in initiating innate immune response against foreign pathogens. Involved in Toll-like receptor (TLR) and IL-1R signaling pathways. Is rapidly recruited by MYD88 to the receptor-signaling complex upon TLR activation. Association with MYD88 leads to IRAK1 phosphorylation by IRAK4 and subsequent autophosphorylation and kinase activation. Phosphorylates E3 ubiquitin ligases Pellino proteins (PELI1, PELI2 and PELI3) to promote pellino-mediated polyubiquitination of IRAK1. Then, the ubiquitin-binding domain of IKBKG/NEMO binds to polyubiquitinated IRAK1 bringing together the IRAK1-MAP3K7/TAK1-TRAF6 complex and the NEMO-IKKA-IKKB complex. In turn, MAP3K7/TAK1 activates IKKs (CHUK/IKKA and IKBKB/IKKB) leading to NF-kappa-B nuclear translocation and activation. Alternatively, phosphorylates TIRAP to promote its ubiquitination and subsequent degradation. Phosphorylates the interferon regulatory factor 7 (IRF7) to induce its activation and translocation to the nucleus, resulting in transcriptional activation of type I IFN genes, which drive the cell in an antiviral state. When sumoylated, translocates to the nucleus and phosphorylates STAT3. This is Interleukin-1 receptor-associated kinase 1 (IRAK1) from Bos taurus (Bovine).